A 560-amino-acid chain; its full sequence is Putative transport protein PBPRA2420 (560 aa).

5 helical membrane passes run 5-25, 37-57, 66-86, 91-111, and 161-181; these read VASL…AVGL, VGNS…GFTF, FMLF…GIFF, HYLL…LAMT, and SLSV…IFLA. 2 RCK C-terminal domains span residues 203–292 and 293–377; these read RGIG…FRNG and KEVF…IGFI. Helical transmembrane passes span 386–406, 409–429, 452–472, 477–497, 506–526, and 539–559; these read LLAF…TLAF, VAFG…LGFL, LMVF…DSFA, MVLV…YLFG, ALLF…DMIN, and AGTY…IIIM.

Belongs to the AAE transporter (TC 2.A.81) family. YbjL subfamily.

It localises to the cell membrane. The polypeptide is Putative transport protein PBPRA2420 (Photobacterium profundum (strain SS9)).